A 397-amino-acid polypeptide reads, in one-letter code: Tryptophan synthase beta chain (397 aa).

Lys-87 is modified (N6-(pyridoxal phosphate)lysine).

This sequence belongs to the TrpB family. In terms of assembly, tetramer of two alpha and two beta chains. Pyridoxal 5'-phosphate is required as a cofactor.

It catalyses the reaction (1S,2R)-1-C-(indol-3-yl)glycerol 3-phosphate + L-serine = D-glyceraldehyde 3-phosphate + L-tryptophan + H2O. It functions in the pathway amino-acid biosynthesis; L-tryptophan biosynthesis; L-tryptophan from chorismate: step 5/5. Its function is as follows. The beta subunit is responsible for the synthesis of L-tryptophan from indole and L-serine. This is Tryptophan synthase beta chain from Escherichia fergusonii (strain ATCC 35469 / DSM 13698 / CCUG 18766 / IAM 14443 / JCM 21226 / LMG 7866 / NBRC 102419 / NCTC 12128 / CDC 0568-73).